An 843-amino-acid chain; its full sequence is Eisosome protein 1 (843 aa).

Ser2 carries the N-acetylserine modification. A Phosphoserine modification is found at Ser2. The interval 13-44 (HNIGKTSGGGSRTSSITSSKKSLKHGSKSLRK) is disordered. Residues 33-44 (KSLKHGSKSLRK) are compositionally biased toward basic residues. A phosphoserine mark is found at Ser88 and Ser130. Positions 120-174 (KMGPKVVRNNSITSATSKTSKESQTKRKSKESPGAAASKAYSMTMETTSLSSQTN) are disordered. 2 stretches are compositionally biased toward polar residues: residues 127–137 (RNNSITSATSK) and 163–174 (TMETTSLSSQTN). Ser182, Ser401, Ser584, and Ser710 each carry phosphoserine. A disordered region spans residues 717–843 (DLPTQLEKIE…QDAISNQEKK (127 aa)). Thr720 carries the post-translational modification Phosphothreonine. The span at 752–764 (STAAKEATETSSA) shows a compositional bias: low complexity. Phosphoserine occurs at positions 763 and 775. A compositionally biased stretch (basic and acidic residues) spans 781 to 797 (SGKEDANDCKSAEHSKE). The span at 798-810 (ISVSQKAGNNKSL) shows a compositional bias: polar residues. Ser816, Ser828, Ser829, and Ser838 each carry phosphoserine.

It belongs to the EIS1 family.

Its subcellular location is the cytoplasmic granule. The protein resides in the cell membrane. Its function is as follows. Required for normal formation of eisosomes, large cytoplasmic protein assemblies that localize to specialized domains on plasma membrane and mark the site of endocytosis. This chain is Eisosome protein 1 (EIS1), found in Saccharomyces cerevisiae (strain Lalvin EC1118 / Prise de mousse) (Baker's yeast).